The chain runs to 120 residues: Basic phospholipase A2 homolog piratoxin-3 (120 aa).

Intrachain disulfides connect Cys-26-Cys-113, Cys-28-Cys-44, Cys-43-Cys-94, Cys-49-Cys-120, Cys-50-Cys-87, Cys-57-Cys-81, and Cys-75-Cys-85. The important for membrane-damaging activities in eukaryotes and bacteria; heparin-binding stretch occupies residues 104-115 (KKYRYHLKPCKK).

Belongs to the phospholipase A2 family. Group II subfamily. D49 sub-subfamily. As to quaternary structure, homodimer; non-covalently linked (probable alternative/compact dimer conformation). Expressed by the venom gland.

Its subcellular location is the secreted. Its function is as follows. Snake venom phospholipase A2 (PLA2) that lacks enzymatic activity. Shows high myotoxin activities. Also has anticoagulant activity. A model of myotoxic mechanism has been proposed: an apo Lys49-PLA2 is activated by the entrance of a hydrophobic molecule (e.g. fatty acid) at the hydrophobic channel of the protein leading to a reorientation of a monomer. This reorientation causes a transition between 'inactive' to 'active' states, causing alignment of C-terminal and membrane-docking sites (MDoS) side-by-side and putting the membrane-disruption sites (MDiS) in the same plane, exposed to solvent and in a symmetric position for both monomers. The MDoS region stabilizes the toxin on membrane by the interaction of charged residues with phospholipid head groups. Subsequently, the MDiS region destabilizes the membrane with penetration of hydrophobic residues. This insertion causes a disorganization of the membrane, allowing an uncontrolled influx of ions (i.e. calcium and sodium), and eventually triggering irreversible intracellular alterations and cell death. This is Basic phospholipase A2 homolog piratoxin-3 from Bothrops pirajai (Piraja's lancehead).